The chain runs to 424 residues: METIFALSSGAPPAAIGVIRISGTEARGALEALAGSVPDARKAALRRLRDGEGKTLDDALVLWLPGPDNATGEDCVELHCHGGRAVIAAIERTLGTMPGLRRAEPGEFTRRAFANGRIDLAEAEGLADLLFAETELQRQVLQASAGGRLSELVGGWRERVLALSAQVESALDFSDEDDVDELAPAFYTDVSTLADELGEWLERPQVERLRDGVRVVFAGPPNAGKSTLFNALLQSEAAIVSPIAGTTRDVLERPVAFGGTPFTLIDTAGLHEGGDDSIERIGIDRARAALRDADIVLWLGPEGEGPDNAWEIDAQSDIDERTAKSAPRLRLSAKTGEGIDALVRDLRDAARDLLPRPGDVAVNARQHALLSEAAGELAEITRGQDLLITAEHLRTARSAFDRFTGRATTEDMLDALFGRFCIGK.

(6S)-5-formyl-5,6,7,8-tetrahydrofolate contacts are provided by Arg-20, Glu-77, and Arg-117. Residues 212–351 (GVRVVFAGPP…LVRDLRDAAR (140 aa)) enclose the TrmE-type G domain. Residue Asn-222 coordinates K(+). Residues 222-227 (NAGKST), 241-247 (SPIAGTT), and 266-269 (DTAG) contribute to the GTP site. Position 226 (Ser-226) interacts with Mg(2+). Ser-241, Ile-243, and Thr-246 together coordinate K(+). Residue Thr-247 participates in Mg(2+) binding. Residue Lys-424 coordinates (6S)-5-formyl-5,6,7,8-tetrahydrofolate.

It belongs to the TRAFAC class TrmE-Era-EngA-EngB-Septin-like GTPase superfamily. TrmE GTPase family. As to quaternary structure, homodimer. Heterotetramer of two MnmE and two MnmG subunits. It depends on K(+) as a cofactor.

It localises to the cytoplasm. Its function is as follows. Exhibits a very high intrinsic GTPase hydrolysis rate. Involved in the addition of a carboxymethylaminomethyl (cmnm) group at the wobble position (U34) of certain tRNAs, forming tRNA-cmnm(5)s(2)U34. The chain is tRNA modification GTPase MnmE from Erythrobacter litoralis (strain HTCC2594).